Reading from the N-terminus, the 333-residue chain is Elongation factor Ts, mitochondrial (333 aa).

A mitochondrion-targeting transit peptide spans 1–17 (MLRTLRPTLPSRCLRLY).

Belongs to the EF-Ts family.

It localises to the mitochondrion. Functionally, associates with the EF-Tu.GDP complex and induces the exchange of GDP to GTP. It remains bound to the aminoacyl-tRNA.EF-Tu.GTP complex up to the GTP hydrolysis stage on the ribosome. The sequence is that of Elongation factor Ts, mitochondrial from Coprinopsis cinerea (strain Okayama-7 / 130 / ATCC MYA-4618 / FGSC 9003) (Inky cap fungus).